The sequence spans 369 residues: Nuclear pore complex-interacting protein family member A6 (369 aa).

Residues 151–170 form a disordered region; that stretch reads SMKEREHGEKERQVSEAEEN.

It belongs to the NPIP family.

This chain is Nuclear pore complex-interacting protein family member A6, found in Homo sapiens (Human).